The sequence spans 299 residues: tRNA dimethylallyltransferase (299 aa).

8 to 15 (GPTASGKT) lines the ATP pocket. 10 to 15 (TASGKT) provides a ligand contact to substrate. Residues 33–36 (DSQQ) are interaction with substrate tRNA.

This sequence belongs to the IPP transferase family. As to quaternary structure, monomer. Mg(2+) serves as cofactor.

The enzyme catalyses adenosine(37) in tRNA + dimethylallyl diphosphate = N(6)-dimethylallyladenosine(37) in tRNA + diphosphate. In terms of biological role, catalyzes the transfer of a dimethylallyl group onto the adenine at position 37 in tRNAs that read codons beginning with uridine, leading to the formation of N6-(dimethylallyl)adenosine (i(6)A). The chain is tRNA dimethylallyltransferase from Anaeromyxobacter dehalogenans (strain 2CP-C).